Consider the following 243-residue polypeptide: Small ribosomal subunit protein uS3 (243 aa).

Residues 39–107 (LRKLISKELQ…KIKLNIKEIH (69 aa)) enclose the KH type-2 domain. The tract at residues 212-243 (VAKSPAEPATTAPTPAPERRERQPRRNSNASA) is disordered.

It belongs to the universal ribosomal protein uS3 family. Part of the 30S ribosomal subunit. Forms a tight complex with proteins S10 and S14.

Functionally, binds the lower part of the 30S subunit head. Binds mRNA in the 70S ribosome, positioning it for translation. The chain is Small ribosomal subunit protein uS3 from Chloroflexus aurantiacus (strain ATCC 29364 / DSM 637 / Y-400-fl).